A 458-amino-acid chain; its full sequence is Argininosuccinate lyase (458 aa).

This sequence belongs to the lyase 1 family. Argininosuccinate lyase subfamily.

It localises to the cytoplasm. The catalysed reaction is 2-(N(omega)-L-arginino)succinate = fumarate + L-arginine. It functions in the pathway amino-acid biosynthesis; L-arginine biosynthesis; L-arginine from L-ornithine and carbamoyl phosphate: step 3/3. In Salmonella paratyphi A (strain ATCC 9150 / SARB42), this protein is Argininosuccinate lyase.